A 1111-amino-acid polypeptide reads, in one-letter code: Lon protease homolog, mitochondrial (1111 aa).

The N-terminal 21 residues, 1–21 (MLRSSRSRLVTRNILLRQFKN), are a transit peptide targeting the mitochondrion. 2 disordered regions span residues 85 to 177 (IQLK…AKQP) and 288 to 311 (PPTSEQNLKDESDVSKSEGVENNE). Residues 88–125 (KQDDKGKDIDQPESENRKKEEEQVPTEEKDNDTAKESE) are compositionally biased toward basic and acidic residues. Residues 126–135 (TSQQRDSVAE) are compositionally biased toward polar residues. A compositionally biased stretch (gly residues) spans 145–167 (GASGNGESSGNGSGDDGNNGSGN). Residues 185–450 (VMALPISRRP…KALTVLKKEL (266 aa)) form the Lon N-terminal domain. Over residues 294-306 (NLKDESDVSKSEG) the composition is skewed to basic and acidic residues. 602-609 (GPPGVGKT) is an ATP binding site. Composition is skewed to basic and acidic residues over residues 819 to 835 (ENEEVKDQKDIKVKQSE) and 853 to 865 (ELIKTQKSHDNKG). Residues 819-866 (ENEEVKDQKDIKVKQSENKSSAEASTVESTTEENELIKTQKSHDNKGS) form a disordered region. Positions 899–1085 (STPPGVVMGL…EDVFQRLFGD (187 aa)) constitute a Lon proteolytic domain. Catalysis depends on residues S991 and K1034.

It belongs to the peptidase S16 family. In terms of assembly, homohexamer or homoheptamer. Organized in a ring with a central cavity.

The protein resides in the mitochondrion matrix. The catalysed reaction is Hydrolysis of proteins in presence of ATP.. Its function is as follows. ATP-dependent serine protease that mediates the selective degradation of misfolded, unassembled or oxidatively damaged polypeptides as well as certain short-lived regulatory proteins in the mitochondrial matrix. May also have a chaperone function in the assembly of inner membrane protein complexes. Participates in the regulation of mitochondrial gene expression and in the maintenance of the integrity of the mitochondrial genome. Binds to mitochondrial DNA in a site-specific manner. In Kluyveromyces lactis (strain ATCC 8585 / CBS 2359 / DSM 70799 / NBRC 1267 / NRRL Y-1140 / WM37) (Yeast), this protein is Lon protease homolog, mitochondrial.